The following is a 156-amino-acid chain: MSRKHKAPIRTVLADPVFNMVVVTKLVNTIMLDGKKSIAQNIVYSAFDIIKEKTGREPYEVFQEALNNITPLLEIRTRRIGGSNYQVPTEVSKRRQQTLSLRWLTNYARLRNEKTMDLRLANEIIDASNKTGGAIKKREDTHKMAEANRAFAHFRW.

Belongs to the universal ribosomal protein uS7 family. Part of the 30S ribosomal subunit. Contacts proteins S9 and S11.

Functionally, one of the primary rRNA binding proteins, it binds directly to 16S rRNA where it nucleates assembly of the head domain of the 30S subunit. Is located at the subunit interface close to the decoding center, probably blocks exit of the E-site tRNA. This Mycoplasmopsis pulmonis (strain UAB CTIP) (Mycoplasma pulmonis) protein is Small ribosomal subunit protein uS7.